The chain runs to 315 residues: Protein LST8 homolog (315 aa).

8 WD repeats span residues 1 to 31 (MGDQ…KTMR), 33 to 71 (VETS…TAPV), 76 to 115 (GVQK…PHCS), 119 to 158 (DCES…HECI), 161 to 200 (EVDA…DQKM), 211 to 250 (AHTR…KWRE), 253 to 292 (IENY…PTRE), and 295 to 315 (GHTK…KVNH).

Belongs to the WD repeat LST8 family.

It localises to the cytoplasm. This is Protein LST8 homolog from Drosophila pseudoobscura pseudoobscura (Fruit fly).